Consider the following 486-residue polypeptide: MAKSCYFRPALLLLLVLLVHAESRGRFEPKILMPTEEANPADQDEDGVGTRWAVLVAGSSGYGNYRHQADVCHAYQILRKGGLKEENIVVLMYDDIANHPLNPRPGTLINHPDGDDVYAGVPKDYTGSSVTAANFYAVLLGDQKAVKGGSGKVIASKPNDHIFVYYADHGGPGVLGMPNTPHIYAADFIETLKKKHASGTYKEMVIYVEACESGSIFEGIMPKDLNIYVTTASNAQESSYGTYCPGMNPSPPSEYITCLGDLYSVAWMEDSETHNLKKETIKQQYHTVKMRTSNYNTYSGGSHVMEYGNNSIKSEKLYLYQGFDPATVNLPLNELPVKSKIGVVNQRDADLLFLWHMYRTSEDGSRKKDDTLKELTETTRHRKHLDASVELIATILFGPTMNVLNLVREPGLPLVDDWECLKSMVRVFEEHCGSLTQYGMKHMRAFANVCNNGVSKELMEEASTAACGGYSEARYTVHPSILGYSA.

The first 21 residues, 1–21, serve as a signal peptide directing secretion; that stretch reads MAKSCYFRPALLLLLVLLVHA. Residue His169 is part of the active site. Residue Cys211 is the Nucleophile of the active site. Residues Cys244 and Cys258 are joined by a disulfide bond. An N-linked (GlcNAc...) asparagine glycan is attached at Asn309. Intrachain disulfides connect Cys420–Cys450 and Cys432–Cys467.

Belongs to the peptidase C13 family. Auto-catalytic activation. Seed specific. Also expressed in the flowers and buds.

Its subcellular location is the vacuole. The protein resides in the protein storage vacuole. The catalysed reaction is Hydrolysis of proteins and small molecule substrates at -Asn-|-Xaa- bonds.. Its function is as follows. Asparagine-specific endopeptidase involved in the processing of vacuolar seed protein precursors into the mature forms. Probably involved in post-translational proteolysis of seed storage proteins in the protein storage vacuole of developing seeds. This is Vacuolar-processing enzyme beta-isozyme from Arabidopsis thaliana (Mouse-ear cress).